The following is an 85-amino-acid chain: Conotoxin Cap15a (85 aa).

A signal peptide spans M1–S23. Residues V24–R49 constitute a propeptide that is removed on maturation. Q50 is subject to Pyrrolidone carboxylic acid.

The protein belongs to the conotoxin O2 superfamily. Contains 4 disulfide bonds. As to expression, expressed by the venom duct.

It is found in the secreted. This chain is Conotoxin Cap15a, found in Conus capitaneus (Captain cone).